The chain runs to 689 residues: DNA ligase (689 aa).

NAD(+)-binding positions include 40–44 (DAEYD), 89–90 (SL), and Glu121. Lys123 acts as the N6-AMP-lysine intermediate in catalysis. The NAD(+) site is built by Arg144, Glu179, Lys295, and Lys319. Zn(2+) is bound by residues Cys413, Cys416, Cys431, and Cys437. The BRCT domain maps to 610–689 (REQSSLTGKI…AEWLTLVRDI (80 aa)).

The protein belongs to the NAD-dependent DNA ligase family. LigA subfamily. The cofactor is Mg(2+). It depends on Mn(2+) as a cofactor.

It catalyses the reaction NAD(+) + (deoxyribonucleotide)n-3'-hydroxyl + 5'-phospho-(deoxyribonucleotide)m = (deoxyribonucleotide)n+m + AMP + beta-nicotinamide D-nucleotide.. Functionally, DNA ligase that catalyzes the formation of phosphodiester linkages between 5'-phosphoryl and 3'-hydroxyl groups in double-stranded DNA using NAD as a coenzyme and as the energy source for the reaction. It is essential for DNA replication and repair of damaged DNA. This Rickettsia bellii (strain OSU 85-389) protein is DNA ligase.